The following is a 1513-amino-acid chain: DNA-directed RNA polymerase subunit beta'' (1513 aa).

Residues Cys-220, Cys-296, Cys-303, and Cys-306 each coordinate Zn(2+). The disordered stretch occupies residues 644–769; it reads RTREKDSENE…EYGNPEEDSV (126 aa). Basic and acidic residues predominate over residues 659–679; sequence NEYRTREEECKTLEDEYRTRE. Positions 680–707 are enriched in acidic residues; that stretch reads EEYETLEDEYGIPENEYETLEDEYGILE. Over residues 726-737 the composition is skewed to basic and acidic residues; sequence NKYRPREDKYGT. Positions 738-767 are enriched in acidic residues; sequence LEEDSEDEHGTLEEDSEEDSEDEYGNPEED.

It belongs to the RNA polymerase beta' chain family. RpoC2 subfamily. In terms of assembly, in plastids the minimal PEP RNA polymerase catalytic core is composed of four subunits: alpha, beta, beta', and beta''. When a (nuclear-encoded) sigma factor is associated with the core the holoenzyme is formed, which can initiate transcription. Requires Zn(2+) as cofactor.

It is found in the plastid. The protein localises to the chloroplast. The catalysed reaction is RNA(n) + a ribonucleoside 5'-triphosphate = RNA(n+1) + diphosphate. Functionally, DNA-dependent RNA polymerase catalyzes the transcription of DNA into RNA using the four ribonucleoside triphosphates as substrates. This is DNA-directed RNA polymerase subunit beta'' from Oryza sativa (Rice).